Here is a 34-residue protein sequence, read N- to C-terminus: Photosystem II reaction center protein Psb30 (34 aa).

The chain crosses the membrane as a helical span at residues 6–26; the sequence is VVFQLMALFFVLAAGPAVVVL.

The protein belongs to the Psb30/Ycf12 family. PSII is composed of 1 copy each of membrane proteins PsbA, PsbB, PsbC, PsbD, PsbE, PsbF, PsbH, PsbI, PsbJ, PsbK, PsbL, PsbM, PsbT, PsbX, PsbY, PsbZ, Psb30/Ycf12, peripheral proteins of the oxygen-evolving complex and a large number of cofactors. It forms dimeric complexes.

It is found in the plastid. The protein resides in the chloroplast thylakoid membrane. A core subunit of photosystem II (PSII), probably helps stabilize the reaction center. This is Photosystem II reaction center protein Psb30 from Stigeoclonium helveticum (Green alga).